The chain runs to 354 residues: Uroporphyrinogen decarboxylase (354 aa).

Residues 25–29, D75, Y152, T207, and H330 contribute to the substrate site; that span reads RQAGR.

The protein belongs to the uroporphyrinogen decarboxylase family. Homodimer.

The protein resides in the cytoplasm. The catalysed reaction is uroporphyrinogen III + 4 H(+) = coproporphyrinogen III + 4 CO2. It participates in porphyrin-containing compound metabolism; protoporphyrin-IX biosynthesis; coproporphyrinogen-III from 5-aminolevulinate: step 4/4. Functionally, catalyzes the decarboxylation of four acetate groups of uroporphyrinogen-III to yield coproporphyrinogen-III. The sequence is that of Uroporphyrinogen decarboxylase from Xanthomonas oryzae pv. oryzae (strain PXO99A).